Consider the following 263-residue polypeptide: UPF0246 protein Strop_2927 (263 aa).

This sequence belongs to the UPF0246 family.

The protein is UPF0246 protein Strop_2927 of Salinispora tropica (strain ATCC BAA-916 / DSM 44818 / JCM 13857 / NBRC 105044 / CNB-440).